Here is a 70-residue protein sequence, read N- to C-terminus: Sec-independent protein translocase protein TatA (70 aa).

The helical transmembrane segment at M1–G21 threads the bilayer. Residues D46–S70 form a disordered region.

This sequence belongs to the TatA/E family. As to quaternary structure, the Tat system comprises two distinct complexes: a TatABC complex, containing multiple copies of TatA, TatB and TatC subunits, and a separate TatA complex, containing only TatA subunits. Substrates initially bind to the TatABC complex, which probably triggers association of the separate TatA complex to form the active translocon.

The protein localises to the cell inner membrane. Functionally, part of the twin-arginine translocation (Tat) system that transports large folded proteins containing a characteristic twin-arginine motif in their signal peptide across membranes. TatA could form the protein-conducting channel of the Tat system. In Thiobacillus denitrificans (strain ATCC 25259 / T1), this protein is Sec-independent protein translocase protein TatA.